The sequence spans 893 residues: TBC domain-containing protein kinase-like protein (893 aa).

A Protein kinase domain is found at 1 to 273; sequence MFPLKDAEMG…PDELMKDQVF (273 aa). A Rab-GAP TBC domain is found at 466–651; it reads DIPPLMRGLT…HLWDTLLLGN (186 aa).

It belongs to the protein kinase superfamily. As to quaternary structure, component of the FERRY complex composed of five subunits, TBCK, PPP1R21, FERRY3, CRYZL1 and GATD1 with a ratio of 1:2:1:2:4, respectively.

It is found in the cytoplasm. The protein localises to the cytoskeleton. It localises to the spindle. The protein resides in the midbody. Its subcellular location is the early endosome. Functionally, component of the FERRY complex (Five-subunit Endosomal Rab5 and RNA/ribosome intermediary). The FERRY complex directly interacts with mRNAs and RAB5A, and functions as a RAB5A effector involved in the localization and the distribution of specific mRNAs most likely by mediating their endosomal transport. The complex recruits mRNAs and ribosomes to early endosomes through direct mRNA-interaction. Also involved in the modulation of mTOR signaling and expression of mTOR complex components. Involved in the control of actin-cytoskeleton organization. The protein is TBC domain-containing protein kinase-like protein (Tbck) of Mus musculus (Mouse).